Reading from the N-terminus, the 243-residue chain is Probable transcriptional regulatory protein BDI_1233 (243 aa).

Belongs to the TACO1 family.

The protein localises to the cytoplasm. The sequence is that of Probable transcriptional regulatory protein BDI_1233 from Parabacteroides distasonis (strain ATCC 8503 / DSM 20701 / CIP 104284 / JCM 5825 / NCTC 11152).